A 423-amino-acid chain; its full sequence is Glycine amidinotransferase, mitochondrial (423 aa).

A mitochondrion-targeting transit peptide spans 1-43 (MLRVRCLRGGSRGAEAVHYIGSRLGRTLTGWVQRTFQSTQAAT). The segment at 43–63 (TASSRNSFAADDKATEPLPKD) is disordered. 2 positions are modified to phosphoserine: Ser-46 and Ser-49. Positions 52 to 61 (ADDKATEPLP) are enriched in basic and acidic residues. Asp-170 lines the arginine pocket. Active-site residues include Asp-254 and His-303. Residues Asp-305, Arg-322, Ser-354, and Ser-355 each contribute to the arginine site. N6-acetyllysine is present on Lys-385. Cys-407 functions as the Amidino-cysteine intermediate in the catalytic mechanism.

The protein belongs to the amidinotransferase family. Homodimer.

It is found in the mitochondrion inner membrane. It catalyses the reaction L-arginine + glycine = guanidinoacetate + L-ornithine. The catalysed reaction is 4-aminobutanoate + L-arginine = 4-guanidinobutanoate + L-ornithine. The enzyme catalyses beta-alanine + L-arginine = 3-guanidinopropanoate + L-ornithine. It carries out the reaction taurine + L-arginine = taurocyamine + L-ornithine. It participates in amine and polyamine biosynthesis; creatine biosynthesis; creatine from L-arginine and glycine: step 1/2. Its function is as follows. Transamidinase that catalyzes the transfer of the amidino group of L-arginine onto the amino moiety of acceptor metabolites such as glycine, beta-alanine, gamma-aminobutyric acid (GABA) and taurine yielding the corresponding guanidine derivatives. Catalyzes the rate-limiting step of creatine biosynthesis, namely the transfer of the amidino group from L-arginine to glycine to generate guanidinoacetate, which is then methylated by GAMT to form creatine. Provides creatine as a source for ATP generation in tissues with high energy demands, in particular skeletal muscle, heart and brain. The polypeptide is Glycine amidinotransferase, mitochondrial (GATM) (Macaca fascicularis (Crab-eating macaque)).